We begin with the raw amino-acid sequence, 381 residues long: RING-H2 finger protein ATL1 (381 aa).

Residues 1–31 (MDLTDRRNPFNNLVFPPPPPPPSTTFTSPIF) are disordered. A helical membrane pass occupies residues 46–66 (IAVIGILATAFLLVSYYIFVI). Residues 134 to 176 (CSVCLNEFQEDEKLRIIPNCCHVFHIDCIDIWLQGNANCPLCR) form an RING-type; atypical zinc finger. Disordered regions lie at residues 249–269 (TSNE…PIKF) and 334–354 (RQIP…GNSR). The segment covering 250–261 (SNEVSTGNSPKS) has biased composition (polar residues).

This sequence belongs to the RING-type zinc finger family. ATL subfamily.

The protein localises to the membrane. It catalyses the reaction S-ubiquitinyl-[E2 ubiquitin-conjugating enzyme]-L-cysteine + [acceptor protein]-L-lysine = [E2 ubiquitin-conjugating enzyme]-L-cysteine + N(6)-ubiquitinyl-[acceptor protein]-L-lysine.. The protein operates within protein modification; protein ubiquitination. This Arabidopsis thaliana (Mouse-ear cress) protein is RING-H2 finger protein ATL1 (ATL1).